The sequence spans 437 residues: 2-methylisoborneol synthase (437 aa).

Positions Ala-32–Pro-125 are disordered. Positions Pro-59–Glu-73 are enriched in pro residues. Mg(2+)-binding residues include Asp-194, Asp-195, Glu-199, Asn-342, Ser-346, and Glu-350.

This sequence belongs to the terpene synthase family. 2-methylisoborneol synthase subfamily. Mg(2+) is required as a cofactor.

The enzyme catalyses (E)-2-methylgeranyl diphosphate + H2O = 2-methylisoborneol + diphosphate. Functionally, catalyzes the cyclization of 2-methylgeranyl diphosphate (2-MeGPP) to 2-methylisoborneol (2-MIB), which likely involves the intermediacy of 2-methyllinalyl diphosphate. This is 2-methylisoborneol synthase from Streptomyces griseus.